Here is a 197-residue protein sequence, read N- to C-terminus: ATP-dependent Clp protease proteolytic subunit 2 (197 aa).

Residue S96 is the Nucleophile of the active site. Residue H121 is part of the active site.

The protein belongs to the peptidase S14 family. As to quaternary structure, fourteen ClpP subunits assemble into 2 heptameric rings which stack back to back to give a disk-like structure with a central cavity, resembling the structure of eukaryotic proteasomes.

It localises to the cytoplasm. It carries out the reaction Hydrolysis of proteins to small peptides in the presence of ATP and magnesium. alpha-casein is the usual test substrate. In the absence of ATP, only oligopeptides shorter than five residues are hydrolyzed (such as succinyl-Leu-Tyr-|-NHMec, and Leu-Tyr-Leu-|-Tyr-Trp, in which cleavage of the -Tyr-|-Leu- and -Tyr-|-Trp bonds also occurs).. Its function is as follows. Cleaves peptides in various proteins in a process that requires ATP hydrolysis. Has a chymotrypsin-like activity. Plays a major role in the degradation of misfolded proteins. The polypeptide is ATP-dependent Clp protease proteolytic subunit 2 (Parasynechococcus marenigrum (strain WH8102)).